Consider the following 89-residue polypeptide: Small membrane A-kinase anchor protein (89 aa).

The segment at Met-1 to Gly-29 is disordered. Gly-2 carries the N-myristoyl glycine lipid modification. Residues Ser-17–Gly-29 show a composition bias toward basic and acidic residues.

Belongs to the small membrane AKAP family. In terms of processing, may be palmitoylated at Cys-3.

The protein localises to the cell membrane. Binds to type I regulatory subunits of protein kinase A and may anchor/target them to the plasma membrane. The chain is Small membrane A-kinase anchor protein from Danio rerio (Zebrafish).